Here is a 141-residue protein sequence, read N- to C-terminus: uncharacterized protein (141 aa).

Belongs to the peptidase C56 family.

This is an uncharacterized protein from Streptomyces lividans.